Consider the following 662-residue polypeptide: MEGPTHPKPSKDKTFSWDLMILVGVLLRLDVGMANPSPHQIYNVTWTITNLVTGTKANATSMLGTLTDAFPTMYFDLCDIIGNTWNPSDQEPFPGYGCDQPMRRWQQRNTPFYVCPGHANRKQCGGPQDGFCAVWGCETTGETYWRPTSSWDYITVKKGVTQGIYQCSGGGWCGPCYDKAVHSSITGASEGGRCNPLILQFTQKGRQTSWDGPKSWGLRLYRSGYDPIALFSVSRQVMTITLPQAMGPNLVLPDQKPPSRQSQIESRVTPHHSQGNGGTPGITLVNASIAPLSTPVTPASPKRIGTGNRLINLVQGTYLALNVTNPNKTKDCWLCLVSRPPYYEGIAVLGNYSNQTNPPPSCLSDPQHKLTISEVSGQGSCIGTVPKTHQALCKKTQKGHKGTHYLAAPSGTYWACNTGLTPCISMAVLNWTSDFCVLIELWPRVTYHQPEYVYTHFDKTVRLRREPISLTVALMLGGLTVGGIAAGVGTGTKALLETAQFGQLQMAMHTDIQALEESISALEKSLTSLSEVVLQNRRGLDILFLQEGGLCAALKEECCFYADHTGLVRDNMAKLRERLKQRQQLFDSQQGWFEGWFNKSPWFTTLISSIMGPLLILLLILLFGPCILNRLVQFVKDRISVVQALILTQQYQQIKQYDPDQP.

Positions 1–34 (MEGPTHPKPSKDKTFSWDLMILVGVLLRLDVGMA) are cleaved as a signal peptide. Residues 35–606 (NPSPHQIYNV…FNKSPWFTTL (572 aa)) lie on the Extracellular side of the membrane. 2 N-linked (GlcNAc...) asparagine; by host glycosylation sites follow: Asn43 and Asn58. 2 cysteine pairs are disulfide-bonded: Cys115/Cys132 and Cys124/Cys137. The interval 251-281 (VLPDQKPPSRQSQIESRVTPHHSQGNGGTPG) is disordered. Positions 258 to 274 (PSRQSQIESRVTPHHSQ) are enriched in polar residues. Asn286, Asn322, and Asn327 each carry an N-linked (GlcNAc...) asparagine; by host glycan. 3 cysteine pairs are disulfide-bonded: Cys332–Cys335, Cys332–Cys559, and Cys551–Cys558. Residues 332–335 (CWLC) carry the CXXC motif. N-linked (GlcNAc...) asparagine; by host glycans are attached at residues Asn351, Asn354, and Asn430. The tract at residues 468 to 488 (ISLTVALMLGGLTVGGIAAGV) is fusion peptide. Coiled coils occupy residues 496 to 545 (LETA…ILFL) and 555 to 591 (KEEC…SQQG). Residues 534–550 (LQNRRGLDILFLQEGGL) form an immunosuppression region. Positions 551–559 (CAALKEECC) match the CX6CC motif. The chain crosses the membrane as a helical span at residues 607–627 (ISSIMGPLLILLLILLFGPCI). Cys626 is lipidated: S-palmitoyl cysteine; by host. Residues 628–662 (LNRLVQFVKDRISVVQALILTQQYQQIKQYDPDQP) lie on the Cytoplasmic side of the membrane.

As to quaternary structure, the mature envelope protein (Env) consists of a trimer of SU-TM heterodimers attached by a labile interchain disulfide bond. Specific enzymatic cleavages in vivo yield mature proteins. Envelope glycoproteins are synthesized as an inactive precursor that is N-glycosylated and processed likely by host cell furin or by a furin-like protease in the Golgi to yield the mature SU and TM proteins. The cleavage site between SU and TM requires the minimal sequence [KR]-X-[KR]-R. The R-peptide is released from the C-terminus of the cytoplasmic tail of the TM protein upon particle formation as a result of proteolytic cleavage by the viral protease. Cleavage of this peptide is required for TM to become fusogenic. Post-translationally, the CXXC motif is highly conserved across a broad range of retroviral envelope proteins. It is thought to participate in the formation of a labile disulfide bond possibly with the CX6CC motif present in the transmembrane protein. Isomerization of the intersubunit disulfide bond to an SU intrachain disulfide bond is thought to occur upon receptor recognition in order to allow membrane fusion. In terms of processing, the transmembrane protein is palmitoylated. The R-peptide is palmitoylated.

The protein localises to the virion membrane. The protein resides in the host cell membrane. The surface protein (SU) attaches the virus to the host cell by binding to its receptor. This interaction triggers the refolding of the transmembrane protein (TM) and is thought to activate its fusogenic potential by unmasking its fusion peptide. Fusion occurs at the host cell plasma membrane. Functionally, the transmembrane protein (TM) acts as a class I viral fusion protein. Under the current model, the protein has at least 3 conformational states: pre-fusion native state, pre-hairpin intermediate state, and post-fusion hairpin state. During viral and target cell membrane fusion, the coiled coil regions (heptad repeats) assume a trimer-of-hairpins structure, positioning the fusion peptide in close proximity to the C-terminal region of the ectodomain. The formation of this structure appears to drive apposition and subsequent fusion of viral and target cell membranes. Membranes fusion leads to delivery of the nucleocapsid into the cytoplasm. In Felis catus (Cat), this protein is Envelope glycoprotein (env).